Consider the following 439-residue polypeptide: 3-phosphoshikimate 1-carboxyvinyltransferase (439 aa).

3-phosphoshikimate-binding residues include Lys-29 and Arg-34. Lys-29 contributes to the phosphoenolpyruvate binding site. Phosphoenolpyruvate contacts are provided by Gly-99 and Arg-128. 6 residues coordinate 3-phosphoshikimate: Ser-171, Ser-172, Gln-173, Ser-199, Asp-316, and Lys-343. Gln-173 contacts phosphoenolpyruvate. Asp-316 functions as the Proton acceptor in the catalytic mechanism. 3 residues coordinate phosphoenolpyruvate: Arg-347, Arg-390, and Lys-416.

Belongs to the EPSP synthase family. In terms of assembly, monomer.

It localises to the cytoplasm. The catalysed reaction is 3-phosphoshikimate + phosphoenolpyruvate = 5-O-(1-carboxyvinyl)-3-phosphoshikimate + phosphate. It participates in metabolic intermediate biosynthesis; chorismate biosynthesis; chorismate from D-erythrose 4-phosphate and phosphoenolpyruvate: step 6/7. Catalyzes the transfer of the enolpyruvyl moiety of phosphoenolpyruvate (PEP) to the 5-hydroxyl of shikimate-3-phosphate (S3P) to produce enolpyruvyl shikimate-3-phosphate and inorganic phosphate. The protein is 3-phosphoshikimate 1-carboxyvinyltransferase of Deinococcus radiodurans (strain ATCC 13939 / DSM 20539 / JCM 16871 / CCUG 27074 / LMG 4051 / NBRC 15346 / NCIMB 9279 / VKM B-1422 / R1).